We begin with the raw amino-acid sequence, 502 residues long: Maturase K (502 aa).

Belongs to the intron maturase 2 family. MatK subfamily.

It is found in the plastid. The protein localises to the chloroplast. Its function is as follows. Usually encoded in the trnK tRNA gene intron. Probably assists in splicing its own and other chloroplast group II introns. In Sisymbrium irio (London rocket), this protein is Maturase K.